The primary structure comprises 507 residues: ATP synthase subunit alpha, chloroplastic (507 aa).

ATP is bound at residue 170-177 (GDRQTGKT).

The protein belongs to the ATPase alpha/beta chains family. In terms of assembly, F-type ATPases have 2 components, CF(1) - the catalytic core - and CF(0) - the membrane proton channel. CF(1) has five subunits: alpha(3), beta(3), gamma(1), delta(1), epsilon(1). CF(0) has four main subunits: a, b, b' and c.

It is found in the plastid. Its subcellular location is the chloroplast thylakoid membrane. It catalyses the reaction ATP + H2O + 4 H(+)(in) = ADP + phosphate + 5 H(+)(out). Functionally, produces ATP from ADP in the presence of a proton gradient across the membrane. The alpha chain is a regulatory subunit. The sequence is that of ATP synthase subunit alpha, chloroplastic from Oryza nivara (Indian wild rice).